The following is a 248-amino-acid chain: Adenosylcobinamide-GDP ribazoletransferase (248 aa).

The next 6 membrane-spanning stretches (helical) occupy residues Phe-36 to Leu-56, Phe-59 to Gly-79, Gly-114 to Leu-134, Tyr-137 to Leu-157, Ile-170 to Leu-190, and Ala-199 to Leu-219.

Belongs to the CobS family. Mg(2+) serves as cofactor.

The protein localises to the cell membrane. The enzyme catalyses alpha-ribazole + adenosylcob(III)inamide-GDP = adenosylcob(III)alamin + GMP + H(+). It carries out the reaction alpha-ribazole 5'-phosphate + adenosylcob(III)inamide-GDP = adenosylcob(III)alamin 5'-phosphate + GMP + H(+). Its pathway is cofactor biosynthesis; adenosylcobalamin biosynthesis; adenosylcobalamin from cob(II)yrinate a,c-diamide: step 7/7. Its function is as follows. Joins adenosylcobinamide-GDP and alpha-ribazole to generate adenosylcobalamin (Ado-cobalamin). Also synthesizes adenosylcobalamin 5'-phosphate from adenosylcobinamide-GDP and alpha-ribazole 5'-phosphate. In Clostridium botulinum (strain Langeland / NCTC 10281 / Type F), this protein is Adenosylcobinamide-GDP ribazoletransferase.